We begin with the raw amino-acid sequence, 82 residues long: Small ribosomal subunit protein bS16 (82 aa).

Belongs to the bacterial ribosomal protein bS16 family.

This is Small ribosomal subunit protein bS16 from Psychromonas ingrahamii (strain DSM 17664 / CCUG 51855 / 37).